The sequence spans 402 residues: Nodulation protein E (402 aa).

In terms of domain architecture, Ketosynthase family 3 (KS3) spans 2–401 (DRRVVITGIG…GMNAVLAFRQ (400 aa)). Catalysis depends on for beta-ketoacyl synthase activity residues C162, H294, and H331. A helical membrane pass occupies residues 329-348 (HAHCLGAASALEMIACVMAI).

This sequence belongs to the thiolase-like superfamily. Beta-ketoacyl-ACP synthases family.

The protein localises to the cell inner membrane. Functionally, proposed to synthesize NOD factor fatty acyl chain. Involved in the synthesis of a highly unsaturated fatty acid moiety, which forms part of a lipo-oligosaccharide that is responsible for host specificity. The protein is Nodulation protein E (nodE) of Rhizobium sp. (strain N33).